Consider the following 54-residue polypeptide: Large ribosomal subunit protein bL33B (54 aa).

Belongs to the bacterial ribosomal protein bL33 family.

The chain is Large ribosomal subunit protein bL33B from Mycolicibacterium smegmatis (strain ATCC 700084 / mc(2)155) (Mycobacterium smegmatis).